Here is a 316-residue protein sequence, read N- to C-terminus: Ferrochelatase (316 aa).

The Fe cation site is built by H188 and E269.

It belongs to the ferrochelatase family.

It localises to the cytoplasm. It catalyses the reaction heme b + 2 H(+) = protoporphyrin IX + Fe(2+). It participates in porphyrin-containing compound metabolism; protoheme biosynthesis; protoheme from protoporphyrin-IX: step 1/1. Its function is as follows. Catalyzes the ferrous insertion into protoporphyrin IX. The polypeptide is Ferrochelatase (Wolinella succinogenes (strain ATCC 29543 / DSM 1740 / CCUG 13145 / JCM 31913 / LMG 7466 / NCTC 11488 / FDC 602W) (Vibrio succinogenes)).